Consider the following 481-residue polypeptide: Aspartyl/glutamyl-tRNA(Asn/Gln) amidotransferase subunit B (481 aa).

The protein belongs to the GatB/GatE family. GatB subfamily. As to quaternary structure, heterotrimer of A, B and C subunits.

It catalyses the reaction L-glutamyl-tRNA(Gln) + L-glutamine + ATP + H2O = L-glutaminyl-tRNA(Gln) + L-glutamate + ADP + phosphate + H(+). It carries out the reaction L-aspartyl-tRNA(Asn) + L-glutamine + ATP + H2O = L-asparaginyl-tRNA(Asn) + L-glutamate + ADP + phosphate + 2 H(+). Its function is as follows. Allows the formation of correctly charged Asn-tRNA(Asn) or Gln-tRNA(Gln) through the transamidation of misacylated Asp-tRNA(Asn) or Glu-tRNA(Gln) in organisms which lack either or both of asparaginyl-tRNA or glutaminyl-tRNA synthetases. The reaction takes place in the presence of glutamine and ATP through an activated phospho-Asp-tRNA(Asn) or phospho-Glu-tRNA(Gln). The chain is Aspartyl/glutamyl-tRNA(Asn/Gln) amidotransferase subunit B from Pseudomonas fluorescens (strain ATCC BAA-477 / NRRL B-23932 / Pf-5).